The primary structure comprises 128 residues: Anti-sigma-F factor antagonist RsfA (128 aa).

An STAS domain is found at 17 to 128; sequence LKATIQHHDS…PTTESALSAT (112 aa). A disulfide bond links C73 and C109.

It belongs to the anti-sigma-factor antagonist family. In terms of assembly, monomer. Interacts with anti-sigma-F factor RsbW (UsfX).

In terms of biological role, positive, redox-sensitive regulator of sigma-F (SigF) activity. When reduced binds to anti-sigma-F factor RsbW (UsfX) preventing its binding to SigF, thus activating transcription. This Mycobacterium tuberculosis (strain CDC 1551 / Oshkosh) protein is Anti-sigma-F factor antagonist RsfA (rsfA).